Reading from the N-terminus, the 186-residue chain is Ribosome-recycling factor (186 aa).

This sequence belongs to the RRF family.

Its subcellular location is the cytoplasm. In terms of biological role, responsible for the release of ribosomes from messenger RNA at the termination of protein biosynthesis. May increase the efficiency of translation by recycling ribosomes from one round of translation to another. This Burkholderia mallei (strain NCTC 10247) protein is Ribosome-recycling factor.